A 552-amino-acid chain; its full sequence is Iduronate 2-sulfatase (552 aa).

A signal peptide spans 1 to 29; sequence MSPPPPPPIWRQLSFSLLLGSFCIALESA. A propeptide spanning residues 30 to 35 is cleaved from the precursor; that stretch reads AQGNSA. Ca(2+) is bound by residues Asp47, Asp48, and Cys86. The Nucleophile role is filled by Cys86. A 3-oxoalanine (Cys) modification is found at Cys86. N-linked (GlcNAc...) asparagine glycosylation occurs at Asn117. The active site involves His140. Asn146 is a glycosylation site (N-linked (GlcNAc...) asparagine). Cys173 and Cys186 form a disulfide bridge. 2 N-linked (GlcNAc...) asparagine glycosylation sites follow: Asn248 and Asn282. 2 residues coordinate Ca(2+): Asp336 and His337. Cys424 and Cys434 are oxidised to a cystine. 2 N-linked (GlcNAc...) asparagine glycosylation sites follow: Asn515 and Asn539.

Belongs to the sulfatase family. In terms of assembly, monomer. The 58-kDa mature form is composed of two chains resulting from proteolitic processing, the 42-kDa chain and the 14-kDa chain that remain stably associated and form the 58-kDa intermediate form which is enzymatically active. It depends on Ca(2+) as a cofactor. In terms of processing, synthesized as a 75-kDa precursor form in the endoplasmic reticulum (ER), and then processed by proteolytic cleavage through various intermediates to yield a 55-kDa mature form, with the release of an 18 kDa polypeptide. The conversion to 3-oxoalanine (also known as C-formylglycine, FGly), of a serine or cysteine residue in prokaryotes and of a cysteine residue in eukaryotes, is critical for catalytic activity. In terms of tissue distribution, found to be expressed in alpha and beta pancreatic cells.

Its subcellular location is the lysosome. The enzyme catalyses Hydrolysis of the 2-sulfate groups of the L-iduronate 2-sulfate units of dermatan sulfate, heparan sulfate and heparin.. Functionally, lysosomal enzyme involved in the degradation pathway of dermatan sulfate and heparan sulfate. The sequence is that of Iduronate 2-sulfatase (Ids) from Mus musculus (Mouse).